Here is a 427-residue protein sequence, read N- to C-terminus: Tyrosine--tRNA ligase (427 aa).

Y33 provides a ligand contact to L-tyrosine. Positions 38–47 (PTASSLTIGN) match the 'HIGH' region motif. The L-tyrosine site is built by Y168 and Q172. The 'KMSKS' region signature appears at 228–232 (KFGKS). Residue K231 coordinates ATP. One can recognise an S4 RNA-binding domain in the interval 361-427 (LDLLSTLTNS…KKNYYLLRFN (67 aa)).

Belongs to the class-I aminoacyl-tRNA synthetase family. TyrS type 1 subfamily. In terms of assembly, homodimer.

The protein resides in the cytoplasm. The catalysed reaction is tRNA(Tyr) + L-tyrosine + ATP = L-tyrosyl-tRNA(Tyr) + AMP + diphosphate + H(+). Functionally, catalyzes the attachment of tyrosine to tRNA(Tyr) in a two-step reaction: tyrosine is first activated by ATP to form Tyr-AMP and then transferred to the acceptor end of tRNA(Tyr). This chain is Tyrosine--tRNA ligase, found in Cytophaga hutchinsonii (strain ATCC 33406 / DSM 1761 / CIP 103989 / NBRC 15051 / NCIMB 9469 / D465).